A 128-amino-acid polypeptide reads, in one-letter code: Adrenodoxin (128 aa).

Residue serine 3 is modified to Phosphoserine. N6-acetyllysine; alternate is present on lysine 6. Lysine 6 is subject to N6-succinyllysine; alternate. The 2Fe-2S ferredoxin-type domain maps to 7–111 (VTVNFINRDG…NMTVRVPDAV (105 aa)). [2Fe-2S] cluster contacts are provided by cysteine 46, cysteine 52, cysteine 55, and cysteine 92. An N6-succinyllysine modification is found at lysine 98. Serine 117 carries the phosphoserine modification.

The protein belongs to the adrenodoxin/putidaredoxin family. As to quaternary structure, interacts with CYP11A1. Requires [2Fe-2S] cluster as cofactor.

It localises to the mitochondrion matrix. In terms of biological role, essential for the synthesis of various steroid hormones. Participates in the reduction of mitochondrial cytochrome P450 for steroidogenesis. Transfers electrons from adrenodoxin reductase to CYP11A1, a cytochrome P450 that catalyzes cholesterol side-chain cleavage. Does not form a ternary complex with adrenodoxin reductase and CYP11A1 but shuttles between the two enzymes to transfer electrons. The chain is Adrenodoxin (FDX1) from Ovis aries (Sheep).